Reading from the N-terminus, the 317-residue chain is Aspartate carbamoyltransferase catalytic subunit (317 aa).

Residues Arg66 and Thr67 each contribute to the carbamoyl phosphate site. L-aspartate is bound at residue Lys94. Carbamoyl phosphate-binding residues include Arg116, His144, and Gln147. L-aspartate contacts are provided by Arg177 and Arg231. Gly272 and Pro273 together coordinate carbamoyl phosphate.

It belongs to the aspartate/ornithine carbamoyltransferase superfamily. ATCase family. Heterododecamer (2C3:3R2) of six catalytic PyrB chains organized as two trimers (C3), and six regulatory PyrI chains organized as three dimers (R2).

The catalysed reaction is carbamoyl phosphate + L-aspartate = N-carbamoyl-L-aspartate + phosphate + H(+). It participates in pyrimidine metabolism; UMP biosynthesis via de novo pathway; (S)-dihydroorotate from bicarbonate: step 2/3. Its function is as follows. Catalyzes the condensation of carbamoyl phosphate and aspartate to form carbamoyl aspartate and inorganic phosphate, the committed step in the de novo pyrimidine nucleotide biosynthesis pathway. The chain is Aspartate carbamoyltransferase catalytic subunit from Bradyrhizobium sp. (strain BTAi1 / ATCC BAA-1182).